Reading from the N-terminus, the 261-residue chain is MDLIPRSIIRTLFRFWTELTSQSSSLAIHELEVAKYKTFASLQYLTCLIVLPWAISISLQNSLESWVTNWWNTGQSKKIFDYLQEENAIRKFEKIEELFLLEIMVKDYSETPSQDIRVEMQKKMIQLVKIYNQDCIHIISHLLANLIGLVLLSVCLILGKKKLGILNSWIQEVFYSLSDTMKAFSILLVTDLCIGFHSPHGWELMINWIFENYGFAHNERIISGLVSTFPVILDTIFKYWIFRRLNRISPSLVVIYHSMNE.

Transmembrane regions (helical) follow at residues 138 to 158, 186 to 206, and 221 to 241; these read IISH…CLIL, ILLV…ELMI, and IISG…KYWI.

The protein belongs to the CemA family.

Its subcellular location is the plastid. The protein localises to the chloroplast inner membrane. It carries out the reaction K(+)(in) + H(+)(out) = K(+)(out) + H(+)(in). In terms of biological role, contributes to K(+)/H(+) antiport activity by supporting proton efflux to control proton extrusion and homeostasis in chloroplasts in a light-dependent manner to modulate photosynthesis. Prevents excessive induction of non-photochemical quenching (NPQ) under continuous-light conditions. Indirectly promotes efficient inorganic carbon uptake into chloroplasts. The protein is Potassium/proton antiporter CemA of Cryptomeria japonica (Japanese cedar).